The following is a 542-amino-acid chain: Chaperonin GroEL (542 aa).

Residues 29-32 (TLGP), 86-90 (DGTTT), G413, and D493 contribute to the ATP site.

It belongs to the chaperonin (HSP60) family. In terms of assembly, forms a cylinder of 14 subunits composed of two heptameric rings stacked back-to-back. Interacts with the co-chaperonin GroES.

The protein resides in the cytoplasm. The catalysed reaction is ATP + H2O + a folded polypeptide = ADP + phosphate + an unfolded polypeptide.. Its function is as follows. Together with its co-chaperonin GroES, plays an essential role in assisting protein folding. The GroEL-GroES system forms a nano-cage that allows encapsulation of the non-native substrate proteins and provides a physical environment optimized to promote and accelerate protein folding. The polypeptide is Chaperonin GroEL (Elusimicrobium minutum (strain Pei191)).